A 357-amino-acid polypeptide reads, in one-letter code: Meiotically up-regulated gene 135 protein (357 aa).

The protein belongs to the UPF0612 family.

It localises to the nucleus. Has a role in meiosis. This chain is Meiotically up-regulated gene 135 protein (mug135), found in Schizosaccharomyces pombe (strain 972 / ATCC 24843) (Fission yeast).